The primary structure comprises 101 residues: Small ribosomal subunit protein uS14 (101 aa).

The protein belongs to the universal ribosomal protein uS14 family. Part of the 30S ribosomal subunit. Contacts proteins S3 and S10.

Functionally, binds 16S rRNA, required for the assembly of 30S particles and may also be responsible for determining the conformation of the 16S rRNA at the A site. In Methylibium petroleiphilum (strain ATCC BAA-1232 / LMG 22953 / PM1), this protein is Small ribosomal subunit protein uS14.